A 110-amino-acid chain; its full sequence is UPF0122 protein lmo1802 (110 aa).

Belongs to the UPF0122 family.

In terms of biological role, might take part in the signal recognition particle (SRP) pathway. This is inferred from the conservation of its genetic proximity to ftsY/ffh. May be a regulatory protein. The sequence is that of UPF0122 protein lmo1802 from Listeria monocytogenes serovar 1/2a (strain ATCC BAA-679 / EGD-e).